The chain runs to 207 residues: Peptidyl-tRNA hydrolase (207 aa).

Y19 serves as a coordination point for tRNA. H24 acts as the Proton acceptor in catalysis. 3 residues coordinate tRNA: F70, N72, and N118.

Belongs to the PTH family. As to quaternary structure, monomer.

Its subcellular location is the cytoplasm. The catalysed reaction is an N-acyl-L-alpha-aminoacyl-tRNA + H2O = an N-acyl-L-amino acid + a tRNA + H(+). Its function is as follows. Hydrolyzes ribosome-free peptidyl-tRNAs (with 1 or more amino acids incorporated), which drop off the ribosome during protein synthesis, or as a result of ribosome stalling. Catalyzes the release of premature peptidyl moieties from peptidyl-tRNA molecules trapped in stalled 50S ribosomal subunits, and thus maintains levels of free tRNAs and 50S ribosomes. The polypeptide is Peptidyl-tRNA hydrolase (Synechococcus sp. (strain CC9311)).